Here is a 596-residue protein sequence, read N- to C-terminus: MEDHNLEEFRQRWQEELAHSQVLRRRRRLEAGERRPRRPEAGARGEPASGYLGLAQGLLEGAGRPPAPRPGRTDRKDVSSRSRSPPDRDAAEPEPLVDQLIRDLNEMDDVPFFDVHLPYELAINIFQYLNRRELGLCAQVSKTWKVIAEDEVLWYRLCRQEGHLPHSRFSDYTCWKLILQECLAPVHLIRPSWMNRKGAVSELEHVPDAVLCDVRSHDGVVIAGYTSGEVRVWDTRTWDYVAPFLESESEEEDPGMQPYVSFVRINSSLAVAAYEDGILNVWDLRTGRFPIFRFEHDARIQALALSQEKPVVATASAFDVVMLYPNEEGNWHVASEFEVQKLVDYLEIVPNTGRYPVAIATAGDLVYLLKAEDSARTLHYVYGQPATCLDVSASQVAFGVKSLGWVYEGNKILVYSLEAERCLSKLGNALGDFTCVNIRDSPPNLMVSGNMDRRVRLHDLRTDKIALSLSAHQLGVSAVQMDDWKIVSGGEEGLVSVWDYRMNQKLWEVHSRHPVRYISFNSHSLITANVPYEKVLRNSDLDNFACHRRHRGLIHAYEFAVDQLAFQSPLPICRLPRDTVAGYSYDLALSFPYDSI.

N-acetylmethionine is present on M1. The tract at residues Q21–P95 is disordered. Residues L29–A43 show a composition bias toward basic and acidic residues. Low complexity predominate over residues R44–R64. Positions G71 to A91 are enriched in basic and acidic residues. Phosphoserine is present on residues S82 and S84. The F-box domain maps to P111–L157. WD repeat units lie at residues A199–E248, Q257–D297, A298–E338, V339–V381, Y382–G427, N428–Q473, L474–S511, and R512–F559.

As to quaternary structure, component of the Cul7-RING(FBXW8) complex consisting of CUL7, RBX1, SKP1 and FBXW8; within the complex interacts with CUL7 and SKP1. Interacts with GLMN isoform 1. Interacts with OBSL1, CUL1, CUL2, CCT6B, PFDN5, CCT2, CCT3, CCT6A, CCT7, VBP1, CCDC8, ARF1, TRIP13, PDCD5 and GORASP1. Interacts with MAP4K1/HPK1 (when autophosphorylated). Associated component of the 3M complex. Interacts with POUF51 (when phosphorylated on 'Ser-347'). In terms of processing, phosphorylation at Ser-84 by mTORC2 promotes FBXW8 stabilization, allowing its translocation to the cytosol in response to insulin. As to expression, expressed in placenta and embryonic brain (at protein level).

The protein resides in the cytoplasm. Its subcellular location is the perinuclear region. It is found in the golgi apparatus. It localises to the cytosol. It functions in the pathway protein modification; protein ubiquitination. Its function is as follows. Substrate-recognition component of the Cul7-RING(FBXW8) ubiquitin ligase complex, which mediates the ubiquitination and subsequent proteasomal degradation of target proteins. The Cul7-RING(FBXW8) complex mediates ubiquitination and consequent degradation of GORASP1, acting as a component of the ubiquitin ligase pathway that regulates Golgi morphogenesis and dendrite patterning in brain. Mediates ubiquitination and degradation of IRS1 in a mTOR-dependent manner: the Cul7-RING(FBXW8) complex recognizes and binds IRS1 previously phosphorylated by S6 kinase (RPS6KB1 or RPS6KB2). The Cul7-RING(FBXW8) complex also mediates ubiquitination of MAP4K1/HPK1: recognizes and binds autophosphorylated MAP4K1/HPK1, leading to its degradation, thereby affecting cell proliferation and differentiation. The Cul7-RING(FBXW8) complex also mediates ubiquitination of phosphorylated cyclin-D1 (CCND1). The Cul7-RING(FBXW8) complex is however not a major regulator of CCND1 stability during the G1/S transition. Associated component of the 3M complex, suggesting that it mediates some of 3M complex functions. This Rattus norvegicus (Rat) protein is F-box/WD repeat-containing protein 8 (Fbxw8).